We begin with the raw amino-acid sequence, 473 residues long: ATP synthase subunit beta (473 aa).

158–165 is a binding site for ATP; sequence GGAGVGKT.

Belongs to the ATPase alpha/beta chains family. In terms of assembly, F-type ATPases have 2 components, CF(1) - the catalytic core - and CF(0) - the membrane proton channel. CF(1) has five subunits: alpha(3), beta(3), gamma(1), delta(1), epsilon(1). CF(0) has three main subunits: a(1), b(2) and c(9-12). The alpha and beta chains form an alternating ring which encloses part of the gamma chain. CF(1) is attached to CF(0) by a central stalk formed by the gamma and epsilon chains, while a peripheral stalk is formed by the delta and b chains.

The protein localises to the cell membrane. It carries out the reaction ATP + H2O + 4 H(+)(in) = ADP + phosphate + 5 H(+)(out). Its function is as follows. Produces ATP from ADP in the presence of a proton gradient across the membrane. The catalytic sites are hosted primarily by the beta subunits. This is ATP synthase subunit beta from Geobacillus stearothermophilus (Bacillus stearothermophilus).